Reading from the N-terminus, the 333-residue chain is Protein VTE6, chloroplastic (333 aa).

The transit peptide at 1 to 65 directs the protein to the chloroplast; that stretch reads MATISSTLLL…SRADGATAAA (65 aa). Helical transmembrane passes span 94–114, 126–146, 171–191, 248–268, 274–294, and 307–327; these read LLIF…SGIA, AYGS…TAAT, VIGS…QVGG, TLAG…LGQI, AVCV…GASF, and VVNV…QQFI.

Belongs to the TMEM19 family.

It is found in the plastid. The protein resides in the chloroplast membrane. The catalysed reaction is phytyl phosphate + a ribonucleoside 5'-triphosphate = phytyl diphosphate + a ribonucleoside 5'-diphosphate. The enzyme catalyses phytyl phosphate + CTP = phytyl diphosphate + CDP. It functions in the pathway cofactor biosynthesis; tocopherol biosynthesis. Phytyl-phosphate kinase catalyzing the conversion of phytyl-monophosphate to phytyl-diphosphate. Involved in the activation and reutilization of phytol from chlorophyll degradation in plant metabolism, including tocopherol (vitamin E) biosynthesis. Involved in the biosynthesis of phylloquinone (vitamin K), which is required for the photosystem I (PSI) complex stability. This is Protein VTE6, chloroplastic from Arabidopsis thaliana (Mouse-ear cress).